Consider the following 903-residue polypeptide: DNA gyrase subunit A (903 aa).

The Topo IIA-type catalytic domain maps to 36–499 (LPDARDGFKP…AIDDSDDEDL (464 aa)). The O-(5'-phospho-DNA)-tyrosine intermediate role is filled by tyrosine 124. A GyrA-box motif is present at residues 526–532 (QNRGGKG). Residues 881 to 895 (VDDDSVVKDDAEKQE) show a composition bias toward basic and acidic residues. Positions 881 to 903 (VDDDSVVKDDAEKQEIGPTETEE) are disordered.

Belongs to the type II topoisomerase GyrA/ParC subunit family. Heterotetramer, composed of two GyrA and two GyrB chains. In the heterotetramer, GyrA contains the active site tyrosine that forms a transient covalent intermediate with DNA, while GyrB binds cofactors and catalyzes ATP hydrolysis.

The protein localises to the cytoplasm. It catalyses the reaction ATP-dependent breakage, passage and rejoining of double-stranded DNA.. In terms of biological role, a type II topoisomerase that negatively supercoils closed circular double-stranded (ds) DNA in an ATP-dependent manner to modulate DNA topology and maintain chromosomes in an underwound state. Negative supercoiling favors strand separation, and DNA replication, transcription, recombination and repair, all of which involve strand separation. Also able to catalyze the interconversion of other topological isomers of dsDNA rings, including catenanes and knotted rings. Type II topoisomerases break and join 2 DNA strands simultaneously in an ATP-dependent manner. In Fibrobacter succinogenes (strain ATCC 19169 / S85), this protein is DNA gyrase subunit A.